Consider the following 461-residue polypeptide: Bifunctional protein GlmU (461 aa).

The segment at 1–235 is pyrophosphorylase; it reads MKAIILAAGL…ITEIFGVNDR (235 aa). Residues 6-9, K20, Q71, and 77-78 contribute to the UDP-N-acetyl-alpha-D-glucosamine site; these read LAAG and GT. Residue D102 participates in Mg(2+) binding. The UDP-N-acetyl-alpha-D-glucosamine site is built by G145, E160, N175, and N233. Residue N233 participates in Mg(2+) binding. Positions 236–256 are linker; the sequence is WELSFAESVIKMRILENLARS. The interval 257-461 is N-acetyltransferase; it reads GVTIHSPESV…LEDKSKVKDE (205 aa). UDP-N-acetyl-alpha-D-glucosamine is bound by residues R339 and K357. H369 functions as the Proton acceptor in the catalytic mechanism. Y372 and N383 together coordinate UDP-N-acetyl-alpha-D-glucosamine. Acetyl-CoA contacts are provided by A386, S411, G429, and R446.

The protein in the N-terminal section; belongs to the N-acetylglucosamine-1-phosphate uridyltransferase family. This sequence in the C-terminal section; belongs to the transferase hexapeptide repeat family. In terms of assembly, homotrimer. Requires Mg(2+) as cofactor.

Its subcellular location is the cytoplasm. The enzyme catalyses alpha-D-glucosamine 1-phosphate + acetyl-CoA = N-acetyl-alpha-D-glucosamine 1-phosphate + CoA + H(+). It carries out the reaction N-acetyl-alpha-D-glucosamine 1-phosphate + UTP + H(+) = UDP-N-acetyl-alpha-D-glucosamine + diphosphate. Its pathway is nucleotide-sugar biosynthesis; UDP-N-acetyl-alpha-D-glucosamine biosynthesis; N-acetyl-alpha-D-glucosamine 1-phosphate from alpha-D-glucosamine 6-phosphate (route II): step 2/2. It participates in nucleotide-sugar biosynthesis; UDP-N-acetyl-alpha-D-glucosamine biosynthesis; UDP-N-acetyl-alpha-D-glucosamine from N-acetyl-alpha-D-glucosamine 1-phosphate: step 1/1. It functions in the pathway bacterial outer membrane biogenesis; LPS lipid A biosynthesis. In terms of biological role, catalyzes the last two sequential reactions in the de novo biosynthetic pathway for UDP-N-acetylglucosamine (UDP-GlcNAc). The C-terminal domain catalyzes the transfer of acetyl group from acetyl coenzyme A to glucosamine-1-phosphate (GlcN-1-P) to produce N-acetylglucosamine-1-phosphate (GlcNAc-1-P), which is converted into UDP-GlcNAc by the transfer of uridine 5-monophosphate (from uridine 5-triphosphate), a reaction catalyzed by the N-terminal domain. This Hydrogenobaculum sp. (strain Y04AAS1) protein is Bifunctional protein GlmU.